The following is a 310-amino-acid chain: Acetyl-coenzyme A carboxylase carboxyl transferase subunit beta (310 aa).

The CoA carboxyltransferase N-terminal domain maps to 27–296 (LWRKCPNCEA…QDRDAEPDDT (270 aa)). C31, C34, C50, and C53 together coordinate Zn(2+). The C4-type zinc finger occupies 31–53 (CPNCEAVLYLPELERHQSVCPKC). Residues 282–310 (THQPHQDRDAEPDDTASQSTLDEFSQADH) are disordered.

Belongs to the AccD/PCCB family. Acetyl-CoA carboxylase is a heterohexamer composed of biotin carboxyl carrier protein (AccB), biotin carboxylase (AccC) and two subunits each of ACCase subunit alpha (AccA) and ACCase subunit beta (AccD). Zn(2+) is required as a cofactor.

Its subcellular location is the cytoplasm. It carries out the reaction N(6)-carboxybiotinyl-L-lysyl-[protein] + acetyl-CoA = N(6)-biotinyl-L-lysyl-[protein] + malonyl-CoA. It functions in the pathway lipid metabolism; malonyl-CoA biosynthesis; malonyl-CoA from acetyl-CoA: step 1/1. Functionally, component of the acetyl coenzyme A carboxylase (ACC) complex. Biotin carboxylase (BC) catalyzes the carboxylation of biotin on its carrier protein (BCCP) and then the CO(2) group is transferred by the transcarboxylase to acetyl-CoA to form malonyl-CoA. This is Acetyl-coenzyme A carboxylase carboxyl transferase subunit beta from Chromohalobacter salexigens (strain ATCC BAA-138 / DSM 3043 / CIP 106854 / NCIMB 13768 / 1H11).